The sequence spans 213 residues: Octanoyltransferase (213 aa).

One can recognise a BPL/LPL catalytic domain in the interval 28–203 (GTSPETLLLL…RFPFLLDERL (176 aa)). Substrate contacts are provided by residues 66–73 (RGGDVTFH), 133–135 (SIG), and 146–148 (GFA). The Acyl-thioester intermediate role is filled by Cys164.

It belongs to the LipB family.

It localises to the cytoplasm. It carries out the reaction octanoyl-[ACP] + L-lysyl-[protein] = N(6)-octanoyl-L-lysyl-[protein] + holo-[ACP] + H(+). It functions in the pathway protein modification; protein lipoylation via endogenous pathway; protein N(6)-(lipoyl)lysine from octanoyl-[acyl-carrier-protein]: step 1/2. Catalyzes the transfer of endogenously produced octanoic acid from octanoyl-acyl-carrier-protein onto the lipoyl domains of lipoate-dependent enzymes. Lipoyl-ACP can also act as a substrate although octanoyl-ACP is likely to be the physiological substrate. In Geobacter metallireducens (strain ATCC 53774 / DSM 7210 / GS-15), this protein is Octanoyltransferase.